The primary structure comprises 339 residues: UDP-3-O-acylglucosamine N-acyltransferase (339 aa).

The Proton acceptor role is filled by His-239.

It belongs to the transferase hexapeptide repeat family. LpxD subfamily. In terms of assembly, homotrimer.

It carries out the reaction a UDP-3-O-[(3R)-3-hydroxyacyl]-alpha-D-glucosamine + a (3R)-hydroxyacyl-[ACP] = a UDP-2-N,3-O-bis[(3R)-3-hydroxyacyl]-alpha-D-glucosamine + holo-[ACP] + H(+). It functions in the pathway bacterial outer membrane biogenesis; LPS lipid A biosynthesis. Its function is as follows. Catalyzes the N-acylation of UDP-3-O-acylglucosamine using 3-hydroxyacyl-ACP as the acyl donor. Is involved in the biosynthesis of lipid A, a phosphorylated glycolipid that anchors the lipopolysaccharide to the outer membrane of the cell. This Aliivibrio fischeri (strain ATCC 700601 / ES114) (Vibrio fischeri) protein is UDP-3-O-acylglucosamine N-acyltransferase.